The chain runs to 323 residues: UDP-N-acetylenolpyruvoylglucosamine reductase (323 aa).

In terms of domain architecture, FAD-binding PCMH-type spans Ile-33–Gly-214. Ser-243 functions as the Proton donor in the catalytic mechanism. Glu-315 is a catalytic residue.

This sequence belongs to the MurB family. Requires FAD as cofactor.

The protein localises to the cytoplasm. The catalysed reaction is UDP-N-acetyl-alpha-D-muramate + NADP(+) = UDP-N-acetyl-3-O-(1-carboxyvinyl)-alpha-D-glucosamine + NADPH + H(+). It functions in the pathway cell wall biogenesis; peptidoglycan biosynthesis. Its function is as follows. Cell wall formation. This is UDP-N-acetylenolpyruvoylglucosamine reductase from Treponema denticola (strain ATCC 35405 / DSM 14222 / CIP 103919 / JCM 8153 / KCTC 15104).